The sequence spans 190 residues: GTP cyclohydrolase 1 1 (190 aa).

Belongs to the GTP cyclohydrolase I family. In terms of assembly, homomer.

It carries out the reaction GTP + H2O = 7,8-dihydroneopterin 3'-triphosphate + formate + H(+). It participates in cofactor biosynthesis; 7,8-dihydroneopterin triphosphate biosynthesis; 7,8-dihydroneopterin triphosphate from GTP: step 1/1. This Pseudomonas putida (strain ATCC 47054 / DSM 6125 / CFBP 8728 / NCIMB 11950 / KT2440) protein is GTP cyclohydrolase 1 1.